Consider the following 765-residue polypeptide: Transient receptor potential cation channel subfamily V member 6 (765 aa).

Residues 1–367 (MGPLQGDGGP…SLKWKRYGRP (367 aa)) are Cytoplasmic-facing. 3 ANK repeats span residues 84–114 (IWESPLLLAAKDNDVQALNKLLKYEDCKVHQ), 118–147 (MGETALHIAALYDNLEAAMVLMEAAPELVF), and 156–185 (EGQTALHIAVVNQNMNLVRALLARRASVSA). The interval 133–143 (EAAMVLMEAAP) is interaction with calmodulin. At Y201 the chain carries Phosphotyrosine; by SRC. ANK repeat units lie at residues 202 to 231 (FGEHPLSFAACVNSEEIVRLLIEHGADIRA), 235 to 277 (LGNT…LVPN), and 279 to 308 (QGLTPFKLAGVEGNTVMFQHLMQKRKHTQW). Residues 368–388 (YFCMLGAIYLLYIICFTMCCI) form a helical membrane-spanning segment. At 389–425 (YRPLKPRTNNRTSPRDNTLLQQKLLQEAYMTPKDDIR) the chain is on the extracellular side. N-linked (GlcNAc...) asparagine glycosylation is present at N398. The helical transmembrane segment at 426-448 (LVGELVTVIGAIIILLVEVPDIF) threads the bilayer. The Cytoplasmic segment spans residues 449-463 (RMGVTRFFGQTILGG). The chain crosses the membrane as a helical span at residues 464-483 (PFHVLIITYAFMVLVTMVMR). Residues 484–489 (LISASG) lie on the Extracellular side of the membrane. Residues 490–509 (EVVPMSFALVLGWCNVMYFA) form a helical membrane-spanning segment. Residues 510 to 529 (RGFQMLGPFTIMIQKMIFGD) are Cytoplasmic-facing. The helical transmembrane segment at 530 to 552 (LMRFCWLMAVVILGFASAFYIIF) threads the bilayer. Residues 553 to 565 (QTEDPEELGHFYD) are Extracellular-facing. The pore-forming intramembrane region spans 566-585 (YPMALFSTFELFLTIIDGPA). Residues 581–585 (IDGPA) carry the Selectivity filter motif. D582 provides a ligand contact to Ca(2+). Residues 586–596 (NYNVDLPFMYS) lie on the Extracellular side of the membrane. A helical membrane pass occupies residues 597-617 (ITYAAFAIIATLLMLNLLIAM). The Cytoplasmic segment spans residues 618–765 (MGDTHWRVAH…EDGESWEYQI (148 aa)). The tract at residues 638–642 (VATTV) is interaction with S100A10. Residues 731–751 (SSANWERLRQGTLRRDLRGII) are interaction with calmodulin. Phosphothreonine; by PKC/PRKCA is present on T742.

Belongs to the transient receptor (TC 1.A.4) family. TrpV subfamily. TRPV6 sub-subfamily. Homotetramer. Probably also forms heterotetramers with TRPV5. Interacts with TRPV5. Interacts with S100A10 and probably with the ANAX2-S100A10 heterotetramer. The interaction with S100A10 is required for the trafficking to the plasma membrane. Interacts with BSPRY. Interacts with TCAF1 and TCAF2 isoform 2. Interacts with calmodulin. In terms of processing, glycosylated. Phosphorylation at Tyr-201 by SRC leads to an increased calcium influx through the channel. Probably dephosphorylated at this site by PTPN1. Phosphorylation by PRKCA at the calmodulin binding site delays channel inactivation. In terms of tissue distribution, expressed at high levels in the gastrointestinal tract, including esophagus, stomach, duodenum, jejunum, ileum and colon, and in pancreas, placenta, prostate and salivary gland. Expressed at moderate levels in liver, kidney and testis. Expressed in trophoblasts of placenta villus trees (at protein level). Expressed in locally advanced prostate cancer, metastatic and androgen-insensitive prostatic lesions but not detected in healthy prostate tissue and benign prostatic hyperplasia.

The protein localises to the cell membrane. It catalyses the reaction Ca(2+)(in) = Ca(2+)(out). Its function is as follows. Calcium selective cation channel that mediates Ca(2+) uptake in various tissues, including the intestine. Important for normal Ca(2+) ion homeostasis in the body, including bone and skin. The channel is activated by low internal calcium level, probably including intracellular calcium store depletion, and the current exhibits an inward rectification. Inactivation includes both a rapid Ca(2+)-dependent and a slower Ca(2+)-calmodulin-dependent mechanism; the latter may be regulated by phosphorylation. In vitro, is slowly inhibited by Mg(2+) in a voltage-independent manner. Heteromeric assembly with TRPV5 seems to modify channel properties. TRPV5-TRPV6 heteromultimeric concatemers exhibit voltage-dependent gating. The sequence is that of Transient receptor potential cation channel subfamily V member 6 (TRPV6) from Homo sapiens (Human).